A 1969-amino-acid polypeptide reads, in one-letter code: Hybrid signal transduction histidine kinase B (1969 aa).

Over residues methionine 1–phenylalanine 10 the composition is skewed to polar residues. 5 disordered regions span residues methionine 1–lysine 91, lysine 218–glutamine 335, glutamine 412–lysine 436, asparagine 468–leucine 505, and glycine 551–asparagine 598. Over residues glutamate 11 to asparagine 55 the composition is skewed to low complexity. Over residues serine 56–asparagine 65 the composition is skewed to basic and acidic residues. The segment covering serine 72–asparagine 86 has biased composition (basic residues). A compositionally biased stretch (polar residues) spans threonine 242–glutamine 252. The segment covering serine 280–serine 292 has biased composition (low complexity). Residues glutamine 293–arginine 304 show a composition bias toward polar residues. The segment covering serine 313–glutamine 335 has biased composition (low complexity). Basic residues predominate over residues glutamine 416–isoleucine 425. The span at asparagine 469–proline 492 shows a compositional bias: polar residues. The span at glycine 551–glycine 571 shows a compositional bias: gly residues. The span at serine 574–asparagine 598 shows a compositional bias: low complexity. 5 consecutive transmembrane segments (helical) span residues alanine 660 to leucine 680, glutamate 684 to isoleucine 704, methionine 708 to isoleucine 728, leucine 747 to isoleucine 767, and phenylalanine 795 to leucine 815. A Histidine kinase domain is found at threonine 967–isoleucine 1188. Histidine 970 bears the Phosphohistidine; by autocatalysis mark. Disordered stretches follow at residues alanine 1359–isoleucine 1415, glycine 1521–serine 1563, asparagine 1617–serine 1709, and glutamine 1755–alanine 1832. Residues glycine 1373 to leucine 1398 show a composition bias toward gly residues. Composition is skewed to low complexity over residues aspartate 1399–serine 1410 and serine 1527–serine 1549. Composition is skewed to polar residues over residues glutamate 1554–serine 1563 and lysine 1626–arginine 1665. Low complexity-rich tracts occupy residues glutamine 1755–glutamine 1774 and lysine 1781–threonine 1821. Positions lysine 1840–histidine 1967 constitute a Response regulatory domain. Aspartate 1889 bears the 4-aspartylphosphate mark.

The protein resides in the membrane. The enzyme catalyses ATP + protein L-histidine = ADP + protein N-phospho-L-histidine.. In terms of biological role, acts in the cytokinin signal transduction pathway that regulates spore germination. Required for the maintenance of spore dormancy. Does not appear to act as a cytokinin receptor. Probably undergoes ATP-dependent autophosphorylation at a conserved histidine residue in the kinase core, which is followed by transfer of the phosphoryl group to a conserved aspartate residue in the receiver domain. This is Hybrid signal transduction histidine kinase B (dhkB) from Dictyostelium discoideum (Social amoeba).